The following is a 198-amino-acid chain: Ribonuclease HII (198 aa).

The region spanning H10–S198 is the RNase H type-2 domain. The a divalent metal cation site is built by D16, E17, and D108.

The protein belongs to the RNase HII family. It depends on Mn(2+) as a cofactor. The cofactor is Mg(2+).

It localises to the cytoplasm. It catalyses the reaction Endonucleolytic cleavage to 5'-phosphomonoester.. Functionally, endonuclease that specifically degrades the RNA of RNA-DNA hybrids. This is Ribonuclease HII from Salmonella arizonae (strain ATCC BAA-731 / CDC346-86 / RSK2980).